The following is a 531-amino-acid chain: 5-(hydroxymethyl)furfural oxidase (531 aa).

Residues 15–16, 36–37, Trp-68, Leu-94, Gly-98, 102–105, Val-233, and Trp-466 contribute to the FAD site; these read TA, EA, and NMVV. The Proton acceptor role is filled by His-467. FAD contacts are provided by residues Ala-501 and 512–513; that span reads TN.

It belongs to the GMC oxidoreductase family. As to quaternary structure, monomer. Requires FAD as cofactor.

The catalysed reaction is 5-hydroxymethylfurfural + 3 O2 + 2 H2O = 2,5-dicarboxyfuran + 3 H2O2 + 2 H(+). It carries out the reaction benzylthiol + O2 = benzothialdehyde + H2O2. Its function is as follows. Involved in the degradation and detoxification of 5-(hydroxymethyl)furfural (HMF) by mediating its oxidation to furan-2,5-dicarboxylate (FDCA), a biobased platform chemical for the production of polymers. Active with a wide range of aromatic and aliphatic primary alcohols and aldehydes: acts on alcohol groups and requires the spontaneous hydration of aldehyde groups for their oxidation. To a lesser extent, is also able to catalyze the oxidation of thiols that are structurally similar to its alcohol substrates, yielding the corresponding thiocarbonyls. The chain is 5-(hydroxymethyl)furfural oxidase from Methylovorus sp. (strain MP688).